Here is a 457-residue protein sequence, read N- to C-terminus: Protein trichome birefringence-like 4 (457 aa).

The helical; Signal-anchor for type II membrane protein transmembrane segment at 19 to 37 (IFLTSLFFLSLFLLSSSSL) threads the bilayer. The GDS motif signature appears at 173 to 175 (GDS). The short motif at 420–434 (DCSHWCLPGVPDSWN) is the DCXHWCLPGXXDXWN motif element.

This sequence belongs to the PC-esterase family. TBL subfamily.

The protein resides in the membrane. Its function is as follows. May act as a bridging protein that binds pectin and other cell wall polysaccharides. Probably involved in maintaining esterification of pectins. May be involved in the specific O-acetylation of cell wall polymers. In Arabidopsis thaliana (Mouse-ear cress), this protein is Protein trichome birefringence-like 4 (TBL4).